The chain runs to 329 residues: Protein SPATA31F3 (329 aa).

Residues 11–31 traverse the membrane as a helical segment; sequence VGYSVYTYGSIFIIALIIWQV. The stretch at 58–85 forms a coiled coil; the sequence is SDRATRAKRTSKEEAEKLQKLLDTMKSQ. Disordered stretches follow at residues 149–184, 201–250, and 288–329; these read ADRS…RSAT, QQLD…AAPT, and KPMT…KRNI. Phosphoserine occurs at positions 152 and 153. Composition is skewed to polar residues over residues 154–184 and 201–223; these read ELTY…RSAT and QQLD…SSTD. A compositionally biased stretch (basic residues) spans 232-242; it reads QKKRKKTKKLA. A compositionally biased stretch (basic and acidic residues) spans 293-320; the sequence is EPEKTHSPVRDQAEGAEKKKKPECDLKA.

It belongs to the SPATA31 family.

Its subcellular location is the membrane. This Rattus norvegicus (Rat) protein is Protein SPATA31F3.